A 386-amino-acid polypeptide reads, in one-letter code: Lipoyl synthase, mitochondrial (386 aa).

[4Fe-4S] cluster-binding residues include Cys-115, Cys-120, Cys-126, Cys-146, Cys-150, Cys-153, and Ser-362. Residues 131-351 (ETGTATATIM…QKLGMEMGFR (221 aa)) form the Radical SAM core domain.

Belongs to the radical SAM superfamily. Lipoyl synthase family. It depends on [4Fe-4S] cluster as a cofactor.

The protein resides in the mitochondrion. It catalyses the reaction [[Fe-S] cluster scaffold protein carrying a second [4Fe-4S](2+) cluster] + N(6)-octanoyl-L-lysyl-[protein] + 2 oxidized [2Fe-2S]-[ferredoxin] + 2 S-adenosyl-L-methionine + 4 H(+) = [[Fe-S] cluster scaffold protein] + N(6)-[(R)-dihydrolipoyl]-L-lysyl-[protein] + 4 Fe(3+) + 2 hydrogen sulfide + 2 5'-deoxyadenosine + 2 L-methionine + 2 reduced [2Fe-2S]-[ferredoxin]. The protein operates within protein modification; protein lipoylation via endogenous pathway; protein N(6)-(lipoyl)lysine from octanoyl-[acyl-carrier-protein]: step 2/2. Its function is as follows. Catalyzes the radical-mediated insertion of two sulfur atoms into the C-6 and C-8 positions of the octanoyl moiety bound to the lipoyl domains of lipoate-dependent enzymes, thereby converting the octanoylated domains into lipoylated derivatives. This Picea sitchensis (Sitka spruce) protein is Lipoyl synthase, mitochondrial.